A 255-amino-acid chain; its full sequence is MGRSPCCEKAHTNRGAWTKEEDERLVAYIRAHGEGCWRSLPKAAGLLRCGKSCRLRWINYLRPDLKRGNFTADEDDLIVKLHSLLGNKWSLIAARLPGRTDNEIKNYWNTHVRRKLLGRGIDPVTHRPIAADAVTVTTVSFQPSPSAAAAAAAEAEATAAKAPRCPDLNLDLCISPPCQQQEEEEVDLKPSAAVVKREVLLGGRGHGHGHGGALCFGCSLGVQKGAPGCSCSSSNGHRCLGLRGGMLDFRGLKMK.

HTH myb-type domains lie at 9 to 61 (KAHT…INYL) and 62 to 116 (RPDL…RRKL). 2 DNA-binding regions (H-T-H motif) span residues 37–61 (WRSLPKAAGLLRCGKSCRLRWINYL) and 89–112 (WSLIAARLPGRTDNEIKNYWNTHV).

It is found in the nucleus. Functionally, transcription factor that negatively regulates genes involved in anthocyanin biosynthesis. The polypeptide is Myb-related protein Zm38 (Zea mays (Maize)).